A 757-amino-acid chain; its full sequence is Polyribonucleotide nucleotidyltransferase (757 aa).

The Mg(2+) site is built by D525 and D531. The region spanning 591-650 is the KH domain; sequence PRVISVNIPVDKIGELIGPKGKTINAIQDETGADISIEEDGAVYIGAVDGPSAEAARAQV. Residues 662 to 734 enclose the S1 motif domain; the sequence is GESFLGTVVK…DRGKLSLAPV (73 aa). A disordered region spans residues 736–757; the sequence is EEAADQEGSAAASDGPEAPAEG.

The protein belongs to the polyribonucleotide nucleotidyltransferase family. Mg(2+) is required as a cofactor.

It is found in the cytoplasm. The enzyme catalyses RNA(n+1) + phosphate = RNA(n) + a ribonucleoside 5'-diphosphate. In terms of biological role, involved in mRNA degradation. Catalyzes the phosphorolysis of single-stranded polyribonucleotides processively in the 3'- to 5'-direction. The sequence is that of Polyribonucleotide nucleotidyltransferase from Clavibacter sepedonicus (Clavibacter michiganensis subsp. sepedonicus).